The chain runs to 190 residues: MLLSDRDIRAEITAGRLGVDPFDDSLVQPSSVDVRLDNLFRVFNNTRYTHIDPAQRQDDLTSLVEPKEGEPFVLHPGEFVLGATLERCTLPDDLAGRLEGKSSLGRLGLLTHSTAGFIDPGFSGHITLELSNVANLPITLWPGMKIGQLCLLRLTSPAEHPYGSSSVGSKYQGQRGPTPSRSYQNFVKND.

DCTP is bound by residues 101–106, Asp119, 127–129, Gln148, Tyr162, and Gln174; these read KSSLGR and TLE. Residue Glu129 is the Proton donor/acceptor of the active site. The tract at residues 161 to 190 is disordered; the sequence is PYGSSSVGSKYQGQRGPTPSRSYQNFVKND. The span at 163–190 shows a compositional bias: polar residues; it reads GSSSVGSKYQGQRGPTPSRSYQNFVKND.

It belongs to the dCTP deaminase family. In terms of assembly, homotrimer.

It catalyses the reaction dCTP + 2 H2O = dUMP + NH4(+) + diphosphate. The protein operates within pyrimidine metabolism; dUMP biosynthesis; dUMP from dCTP: step 1/1. Functionally, bifunctional enzyme that catalyzes both the deamination of dCTP to dUTP and the hydrolysis of dUTP to dUMP without releasing the toxic dUTP intermediate. In Mycolicibacterium vanbaalenii (strain DSM 7251 / JCM 13017 / BCRC 16820 / KCTC 9966 / NRRL B-24157 / PYR-1) (Mycobacterium vanbaalenii), this protein is dCTP deaminase, dUMP-forming.